The chain runs to 284 residues: 2-dehydro-3-deoxyphosphooctonate aldolase (284 aa).

Belongs to the KdsA family.

Its subcellular location is the cytoplasm. The catalysed reaction is D-arabinose 5-phosphate + phosphoenolpyruvate + H2O = 3-deoxy-alpha-D-manno-2-octulosonate-8-phosphate + phosphate. The protein operates within carbohydrate biosynthesis; 3-deoxy-D-manno-octulosonate biosynthesis; 3-deoxy-D-manno-octulosonate from D-ribulose 5-phosphate: step 2/3. It functions in the pathway bacterial outer membrane biogenesis; lipopolysaccharide biosynthesis. In Haemophilus influenzae (strain 86-028NP), this protein is 2-dehydro-3-deoxyphosphooctonate aldolase.